The chain runs to 738 residues: Flowering time control protein FCA (738 aa).

The interval 1 to 118 (MHRGGDRSTD…RGDHSDHDNR (118 aa)) is disordered. Gly residues-rich tracts occupy residues 52 to 70 (RGGG…GGGR) and 81 to 98 (SGGG…GEPG). Residues 109 to 118 (RGDHSDHDNR) are compositionally biased toward basic and acidic residues. 2 RRM domains span residues 122 to 203 (VKLF…YADG) and 213 to 293 (HKLF…FADP). Disordered regions lie at residues 292 to 451 (DPKR…PAQQ) and 566 to 595 (QQSN…IIPS). Over residues 301–311 (SRGGPAFGGPG) the composition is skewed to gly residues. Positions 342–358 (HPSSPRSAPHQFNNFGS) are enriched in polar residues. The span at 368–377 (TVTSTTDTAT) shows a compositional bias: low complexity. Residues 383 to 401 (FSGNGSLSSQTAVPSSSHM) are compositionally biased toward polar residues. Positions 435 to 451 (QLQNNQQGQPLQGPAQQ) are enriched in low complexity. Polar residues predominate over residues 575-595 (PTQGQPVQSSNPGAPNAIIPS). The WW domain maps to 609 to 642 (VPLTCNWTEHTSPEGFKYYYNSITRESKWDKPEE). The disordered stretch occupies residues 670 to 738 (MQQLQSPPQA…QSAQERAWKS (69 aa)). The segment covering 683 to 706 (PAMQPVQQIPQAQQGQQQMQMKQQ) has biased composition (low complexity). A compositionally biased stretch (polar residues) spans 723–732 (RIQQGIQSAQ).

As to quaternary structure, interacts with FY. Binds to SF1, FIK, RPRD1B, OsI_31983 and MADS8.

The protein resides in the nucleus. Functionally, plays a major role in the promotion of the transition of the vegetative meristem to reproductive development. Required for RNA-mediated chromatin silencing of a range of loci in the genome. Cotranscriptionally recognizes aberrant RNA and marks it for silencing. Controls alternative cleavage and polyadenylation on pre-mRNAs and antisense RNAs. Regulates flowering time, seed size and cell volume, probably via the modulation of cell size. The protein is Flowering time control protein FCA of Oryza sativa subsp. indica (Rice).